Consider the following 508-residue polypeptide: Photosystem II CP47 reaction center protein (508 aa).

Helical transmembrane passes span 21 to 36 (SVHL…WAGS), 101 to 115 (IILS…IWHW), 140 to 156 (GIHL…FGAF), 203 to 218 (IAAG…FHLS), 237 to 252 (VLSS…AFVV), and 457 to 472 (TFAL…HGAR).

It belongs to the PsbB/PsbC family. PsbB subfamily. PSII is composed of 1 copy each of membrane proteins PsbA, PsbB, PsbC, PsbD, PsbE, PsbF, PsbH, PsbI, PsbJ, PsbK, PsbL, PsbM, PsbT, PsbX, PsbY, PsbZ, Psb30/Ycf12, at least 3 peripheral proteins of the oxygen-evolving complex and a large number of cofactors. It forms dimeric complexes. It depends on Binds multiple chlorophylls. PSII binds additional chlorophylls, carotenoids and specific lipids. as a cofactor.

It localises to the plastid. The protein localises to the chloroplast thylakoid membrane. Functionally, one of the components of the core complex of photosystem II (PSII). It binds chlorophyll and helps catalyze the primary light-induced photochemical processes of PSII. PSII is a light-driven water:plastoquinone oxidoreductase, using light energy to abstract electrons from H(2)O, generating O(2) and a proton gradient subsequently used for ATP formation. This is Photosystem II CP47 reaction center protein from Adiantum capillus-veneris (Maidenhair fern).